We begin with the raw amino-acid sequence, 344 residues long: MTADISLRPADHPAVKSGKVGVLLVNLGTPDGTDYTSMRRYLREFLTDRRVIEWSRWKWYPILFGIVLNRRPQKVGRAYELIWNKEKNESFLRTYTRNQSELMAERLKDLDNVKVDWAMRYGTPSIASRIEALKQEGCDRIVLFPLYPQYAAATTATVNDKAFHKLLSMRWQPALRTVPDYHDDETYIDALAQSVEKHLSSLDWKPDMLIASFHGIPMSYFKQGDPYYCQCQKTGRLLRERLGLTQENFMVTFQSRFGPEEWLQPYTDKTVEKLARDGVKRIAVINPGFVSDCLETLEEIAEQAAHSFHENGGEKFAHIPCLNDSEDGMKVLEKVVRRELQGWV.

Fe cation contacts are provided by His214 and Glu295.

It belongs to the ferrochelatase family.

It is found in the cytoplasm. The enzyme catalyses heme b + 2 H(+) = protoporphyrin IX + Fe(2+). It functions in the pathway porphyrin-containing compound metabolism; protoheme biosynthesis; protoheme from protoporphyrin-IX: step 1/1. Its function is as follows. Catalyzes the ferrous insertion into protoporphyrin IX. The chain is Ferrochelatase from Rhizobium etli (strain CIAT 652).